The primary structure comprises 658 residues: DNA mismatch repair protein MutL (658 aa).

Positions 114–130 (RQEDSSHATQVKAEDGK) are enriched in basic and acidic residues. Disordered stretches follow at residues 114 to 138 (RQEDSSHATQVKAEDGKLSSPTAAA) and 353 to 405 (PMPS…HSLS). Positions 361-372 (ENLFDSASNHPT) are enriched in polar residues.

This sequence belongs to the DNA mismatch repair MutL/HexB family.

Its function is as follows. This protein is involved in the repair of mismatches in DNA. It is required for dam-dependent methyl-directed DNA mismatch repair. May act as a 'molecular matchmaker', a protein that promotes the formation of a stable complex between two or more DNA-binding proteins in an ATP-dependent manner without itself being part of a final effector complex. This is DNA mismatch repair protein MutL from Neisseria gonorrhoeae (strain NCCP11945).